The primary structure comprises 84 residues: UPF0457 protein BT9727_3043 (84 aa).

It belongs to the UPF0457 family.

In Bacillus thuringiensis subsp. konkukian (strain 97-27), this protein is UPF0457 protein BT9727_3043.